The chain runs to 2138 residues: Protein virilizer homolog (2138 aa).

Disordered stretches follow at residues 1503–1574, 1638–1664, 1855–1881, 2013–2035, and 2058–2094; these read RLPQ…SMHV, NPTPARDTEKVAGKPKQFKADPDDDLQ, PVIPHSSDSLSNQSSPFISHGTQSSGG, PMQPPQHVRPPIQISQPSEQGVS, and YYHPPQQQEISQVQQQQQHHAVQGQQGAGTSQQQESG. Positions 1528–1541 are enriched in polar residues; that stretch reads ENSSVDIPTQNSIQ. Composition is skewed to polar residues over residues 1862–1881 and 2025–2035; these read DSLSNQSSPFISHGTQSSGG and QISQPSEQGVS.

It belongs to the vir family. Interacts with MTB, FIP37 and HAKAI. Associates with MTA, MTB, FIP37 and HAKAI to form the m6A writer complex which is essential for adenosine methylation at specific mRNA sequences.

It localises to the nucleus speckle. The protein resides in the nucleus. Its subcellular location is the nucleoplasm. Subunit of the N6-methyltransferase complex, a multiprotein complex that mediates N6-methyladenosine (m6A) methylation at the 5'-[AG]GAC-3' consensus sites of some mRNAs. Associates with MTA, MTB, FIP37 and HAKAI to form the m6A writer complex which is essential for adenosine methylation at specific mRNA sequences. N6-methyladenosine (m6A) plays a role in mRNA stability, processing, translation efficiency and editing. This chain is Protein virilizer homolog, found in Arabidopsis thaliana (Mouse-ear cress).